The following is a 58-amino-acid chain: Putative transcript Y 13 protein (58 aa).

The helical transmembrane segment at 17–37 (LLGWDLNLSLFLGLCLMLLLA) threads the bilayer.

The protein localises to the membrane. The protein is Putative transcript Y 13 protein (TTTY13) of Homo sapiens (Human).